The primary structure comprises 39 residues: Osmotin-like protein (39 aa).

It belongs to the thaumatin family. In terms of processing, contains intrachain disulfide bonds.

Functionally, may be an important antifungal protein. The protein is Osmotin-like protein of Hevea brasiliensis (Para rubber tree).